Here is a 353-residue protein sequence, read N- to C-terminus: Polyadenylate-binding protein-interacting protein 10 (353 aa).

The disordered stretch occupies residues 1 to 61 (MAVAENAGVK…IDSTPETDDR (61 aa)). Residues 20–31 (NNNTAASATETT) are compositionally biased toward low complexity. Positions 96-106 (KLNPMAQEFVP) match the PAM2-like motif. A disordered region spans residues 128 to 159 (AAPPKLADGNDHFPRRRRSFGQGKRRMNKRTS). The span at 141–156 (PRRRRSFGQGKRRMNK) shows a compositional bias: basic residues. The Bipartite nuclear localization signal signature appears at 142-153 (RRRRSFGQGKRR). RRM domains follow at residues 169-244 (RTVY…PSKT) and 266-341 (RTVY…PSKT).

In terms of tissue distribution, expressed in cauline leaves, stems, rosette leaves, immature siliques and primary inflorescences.

The protein localises to the nucleus. The sequence is that of Polyadenylate-binding protein-interacting protein 10 (CID10) from Arabidopsis thaliana (Mouse-ear cress).